A 136-amino-acid polypeptide reads, in one-letter code: uncharacterized protein (136 aa).

Residues 19-39 (LGFPLGTALLLIIIFSLSGIF) form a helical membrane-spanning segment. Disordered stretches follow at residues 54 to 87 (SLANGRPSADIESNPYKPKPPFPEMKKPQNLSVP) and 112 to 136 (KLTVDVQTPPQSPPVKPARFPVPLY).

The protein localises to the membrane. This is an uncharacterized protein from Arabidopsis thaliana (Mouse-ear cress).